The chain runs to 356 residues: MHHQWLLLAACFWVIFMFMVASKFITLTFKDPDGYSAKQEFVFLTTMPEAEKLRGEKHFPEVPKPTGKMLSDSRPDQPPVYLERLELIRNTCKEEALRNLSHTEVSKFVLDRIFVCDKHKILFCQTPKVGNTQWKKVLIVLNGAFSSIEEIPENVVHDHEKNGLPRLSSFSKIGIQKRLKTYFKFFIVRDPFERLISAFKDKFVHNPRFEPWYRHEIAPGIIRKYRKNRTETRGIQFEDFVRYLGDPNRRWLDLQFGDHIIHWVTYVELCAPCEIKYSVVGHHETLEADAPYILKEAGIDHLVSYPTIPPGITMYNRTKVEQYFLGISKRDIRRLYARFEGDFKLFGYQKPDFLLN.

At 1-6 (MHHQWL) the chain is on the cytoplasmic side. Residues 7–27 (LLAACFWVIFMFMVASKFITL) form a helical; Signal-anchor for type II membrane protein membrane-spanning segment. At 28 to 356 (TFKDPDGYSA…GYQKPDFLLN (329 aa)) the chain is on the lumenal side. N-linked (GlcNAc...) asparagine glycosylation occurs at asparagine 99. 3'-phosphoadenylyl sulfate-binding positions include 127 to 133 (PKVGNTQ) and 189 to 197 (RDPFERLIS). Residues asparagine 228 and asparagine 316 are each glycosylated (N-linked (GlcNAc...) asparagine).

The protein belongs to the sulfotransferase 2 family.

Its subcellular location is the golgi apparatus membrane. It carries out the reaction 3-O-{beta-D-GlcA-(1-&gt;[3)-alpha-D-Xyl-(1-&gt;3)-beta-D-GlcA-(1-&gt;](n)-4)-beta-D-Xyl-(1-&gt;4)-Rib-ol-P-Rib-ol-P-3-beta-D-GalNAc-(1-&gt;3)-beta-D-GlcNAc-(1-&gt;4)-O-6-P-alpha-D-Man}-L-Thr-[protein] + 3'-phosphoadenylyl sulfate = 3-O-{O-3-S-beta-D-GlcA-(1-&gt;[3)-alpha-D-Xyl-(1-&gt;3)-beta-D-GlcA-(1-&gt;](n)-4)-beta-D-Xyl-(1-&gt;4)-Rib-ol-P-Rib-ol-P-3-beta-D-GalNAc-(1-&gt;3)-beta-D-GlcNAc-(1-&gt;4)-O-6-P-alpha-D-Man}-L-Thr-[protein] + adenosine 3',5'-bisphosphate + H(+). The catalysed reaction is 17beta-estradiol 3-O-(beta-D-glucuronate) + 3'-phosphoadenylyl sulfate = 17beta-estradiol 3-O-(3-sulfo-beta-D-glucuronate) + adenosine 3',5'-bisphosphate + H(+). The enzyme catalyses 17beta-estradiol 3-O-(beta-D-glucuronate) 17-sulfate + 3'-phosphoadenylyl sulfate = 17beta-estradiol 3-O-(3-sulfo-beta-D-glucuronate) 17-sulfate + adenosine 3',5'-bisphosphate + H(+). It catalyses the reaction 17beta-estradiol 17-O-(beta-D-glucuronate) + 3'-phosphoadenylyl sulfate = 17beta-estradiol 17-O-(3-sulfo-beta-D-glucuronate) + adenosine 3',5'-bisphosphate + H(+). It carries out the reaction 16alpha,17beta-estriol 3-O-(beta-D-glucuronate) + 3'-phosphoadenylyl sulfate = 16alpha,17beta-estriol 3-O-(3-sulfo-beta-D-glucuronate) + adenosine 3',5'-bisphosphate + H(+). The catalysed reaction is 16alpha,17beta-estriol 16-O-(beta-D-glucuronate) + 3'-phosphoadenylyl sulfate = 16alpha,17beta-estriol 16-O-(3-sulfo-beta-D-glucuronate) + adenosine 3',5'-bisphosphate + H(+). The enzyme catalyses 16alpha,17beta-estriol 17-O-(beta-D-glucuronate) + 3'-phosphoadenylyl sulfate = 16alpha,17beta-estriol 17-O-(3-sulfo-beta-D-glucuronate) + adenosine 3',5'-bisphosphate + H(+). It catalyses the reaction estrone 3-O-(beta-D-glucuronate) + 3'-phosphoadenylyl sulfate = estrone 3-O-(3-sulfo-beta-D-glucuronate) + adenosine 3',5'-bisphosphate + H(+). It carries out the reaction 3alpha,20alpha-dihydroxy-5beta-pregnane 3-O-(beta-D-glucuronate) + 3'-phosphoadenylyl sulfate = 3alpha,20alpha-dihydroxy-5beta-pregnane 3-O-(3-sulfo-beta-D-glucuronate) + adenosine 3',5'-bisphosphate + H(+). The catalysed reaction is testosterone 17-O-(beta-D-glucuronate) + 3'-phosphoadenylyl sulfate = testosterone 17-O-(3-sulfo-beta-D-glucuronate) + adenosine 3',5'-bisphosphate + H(+). The enzyme catalyses 3beta-androst-5-en-17-one 3-O-(beta-D-glucuronate) + 3'-phosphoadenylyl sulfate = 3beta-androst-5-en-17-one 3-O-(3-sulfo-beta-D-glucuronate) + adenosine 3',5'-bisphosphate + H(+). It catalyses the reaction 3alpha,17alpha-dihydroxy-5beta-androstane-11-one-17beta-carboxylate 3-O-(beta-D-glucuronate) + 3'-phosphoadenylyl sulfate = 3alpha,17alpha-dihydroxy-5beta-androstane-11-one-17beta-carboxylate 3-O-(3-sulfo-beta-D-glucuronate) + adenosine 3',5'-bisphosphate + H(+). It carries out the reaction 3alpha-hydroxyetiocholan-17-one 3-O-(beta-D-glucuronate) + 3'-phosphoadenylyl sulfate = 3alpha-hydroxyetiocholan-17-one 3-O-(3-sulfo-beta-D-glucuronate) + adenosine 3',5'-bisphosphate + H(+). Its pathway is steroid metabolism. It participates in protein modification; carbohydrate sulfation. Its function is as follows. Catalyzes the transfer of sulfate from 3'-phosphoadenylyl sulfate (PAPS) to position 3 of terminal glucuronic acid of both protein- and lipid-linked oligosaccharides. Participates in biosynthesis of HNK-1 carbohydrate structure 3-O-sulfo-beta-D-GlcA-(1-&gt;3)-beta-D-Gal-(1-&gt;4)-D-GlcNAc-R, a sulfated glucuronyl-lactosaminyl residue carried by many neural recognition molecules, which is involved in cell interactions during ontogenetic development and in synaptic plasticity in the adult. May be indirectly involved in synapse plasticity of the hippocampus, via its role in HNK-1 biosynthesis. Sulfates terminal glucuronyl residue of the laminin globular (LG)-domain binding epitope on DAG1/alpha-dystroglycan and prevents further polymerization by LARGE1 glycosyltransferase. Likely defines the chain length of LG epitope, conferring binding specificity to extracellular matrix components. Plays a role in down-regulating the steroid hormones. Sulfates glucuronidated estrogens and androgens with an impact in hormone cycle and fertility. Has a preference for glucuronyl moiety at the 3-hydroxyl group of a sterol ring rather than the 17-hydroxyl group, showing high catalytic efficiency for 17beta-estradiol 3-O-(beta-D-glucuronate) and dehydroepiandrosterone 3-O-(beta-D-glucuronate) hormones. This is Carbohydrate sulfotransferase 10 from Mus musculus (Mouse).